The chain runs to 97 residues: Large ribosomal subunit protein uL23 (97 aa).

The protein belongs to the universal ribosomal protein uL23 family. As to quaternary structure, part of the 50S ribosomal subunit. Contacts protein L29, and trigger factor when it is bound to the ribosome.

In terms of biological role, one of the early assembly proteins it binds 23S rRNA. One of the proteins that surrounds the polypeptide exit tunnel on the outside of the ribosome. Forms the main docking site for trigger factor binding to the ribosome. The chain is Large ribosomal subunit protein uL23 from Acidithiobacillus ferrooxidans (strain ATCC 23270 / DSM 14882 / CIP 104768 / NCIMB 8455) (Ferrobacillus ferrooxidans (strain ATCC 23270)).